The sequence spans 213 residues: Leucine-rich repeat protein 1 (213 aa).

Residues 1–21 form the signal peptide; sequence MGAGALGVVAMVAAAVVVAMA. 4 LRR repeats span residues 90–113, 115–137, 138–161, and 163–186; these read DHLQ…LGNL, NLIS…LGKL, TSLV…LAGI, and SLKV…PFEH.

In terms of assembly, interacts with HIR1.

It is found in the early endosome membrane. The protein localises to the late endosome membrane. The protein resides in the cell membrane. Involved in plant defense response. The polypeptide is Leucine-rich repeat protein 1 (Oryza sativa subsp. indica (Rice)).